The following is a 399-amino-acid chain: Succinate--CoA ligase [ADP-forming] subunit beta (399 aa).

Positions 9–254 constitute an ATP-grasp domain; it reads KELLAKYGIG…ETEEDPAEVE (246 aa). Residues K46, 53-55, V112, and E117 contribute to the ATP site; that span reads GRG. Residues N209 and D223 each contribute to the Mg(2+) site. Substrate contacts are provided by residues N274 and 331 to 333; that span reads GIM.

It belongs to the succinate/malate CoA ligase beta subunit family. In terms of assembly, heterotetramer of two alpha and two beta subunits. The cofactor is Mg(2+).

It carries out the reaction succinate + ATP + CoA = succinyl-CoA + ADP + phosphate. The catalysed reaction is GTP + succinate + CoA = succinyl-CoA + GDP + phosphate. It participates in carbohydrate metabolism; tricarboxylic acid cycle; succinate from succinyl-CoA (ligase route): step 1/1. Succinyl-CoA synthetase functions in the citric acid cycle (TCA), coupling the hydrolysis of succinyl-CoA to the synthesis of either ATP or GTP and thus represents the only step of substrate-level phosphorylation in the TCA. The beta subunit provides nucleotide specificity of the enzyme and binds the substrate succinate, while the binding sites for coenzyme A and phosphate are found in the alpha subunit. The polypeptide is Succinate--CoA ligase [ADP-forming] subunit beta (Erythrobacter litoralis (strain HTCC2594)).